The primary structure comprises 125 residues: Protein ApaG (125 aa).

The ApaG domain maps to 1–125 (MIEQPRICVQ…FRLAIPALIH (125 aa)).

The chain is Protein ApaG from Yersinia pestis bv. Antiqua (strain Antiqua).